A 205-amino-acid chain; its full sequence is Arginine exporter protein ArgO (205 aa).

A run of 6 helical transmembrane segments spans residues 1–21 (MLAV…PLGP), 42–62 (LCAL…SALL), 67–87 (LLLA…GWGA), 111–131 (ILVT…DTFV), 147–167 (WFAL…AFLA), and 185–205 (LFVG…GFGL).

Belongs to the LysE/ArgO transporter (TC 2.A.75) family.

It localises to the cell inner membrane. The catalysed reaction is L-arginine(in) = L-arginine(out). In terms of biological role, involved in the export of arginine. Important to control the intracellular level of arginine and the correct balance between arginine and lysine. This is Arginine exporter protein ArgO from Yersinia pseudotuberculosis serotype O:3 (strain YPIII).